The primary structure comprises 443 residues: tRNA modification GTPase MnmE (443 aa).

(6S)-5-formyl-5,6,7,8-tetrahydrofolate-binding residues include Arg23, Glu80, and Lys120. Positions 217 to 367 constitute a TrmE-type G domain; that stretch reads GFEVVILGAP…LLAEIGRRAA (151 aa). Residues 227-232, 246-252, and 271-274 each bind GTP; these read NAGKSS, TDEPGTT, and DTAG. Mg(2+)-binding residues include Ser231 and Thr252. Lys443 lines the (6S)-5-formyl-5,6,7,8-tetrahydrofolate pocket.

This sequence belongs to the TRAFAC class TrmE-Era-EngA-EngB-Septin-like GTPase superfamily. TrmE GTPase family. In terms of assembly, homodimer. Heterotetramer of two MnmE and two MnmG subunits. It depends on K(+) as a cofactor.

It is found in the cytoplasm. In terms of biological role, exhibits a very high intrinsic GTPase hydrolysis rate. Involved in the addition of a carboxymethylaminomethyl (cmnm) group at the wobble position (U34) of certain tRNAs, forming tRNA-cmnm(5)s(2)U34. The protein is tRNA modification GTPase MnmE of Mesorhizobium japonicum (strain LMG 29417 / CECT 9101 / MAFF 303099) (Mesorhizobium loti (strain MAFF 303099)).